A 1084-amino-acid polypeptide reads, in one-letter code: Ribonucleoside-diphosphate reductase NrdEB subunit alpha (1084 aa).

Residues T152, 168–169 (SC), and G197 contribute to the substrate site. C169 and C793 form a disulfide bridge. N379 (proton acceptor) is an active-site residue. Catalysis depends on C381, which acts as the Cysteine radical intermediate. One can recognise a DOD-type homing endonuclease domain in the interval 503 to 654 (IMGIIAGDGT…VQKLLLNMGV (152 aa)). E768 (proton acceptor) is an active-site residue. 964-968 (PTGSI) serves as a coordination point for substrate.

Belongs to the ribonucleoside diphosphate reductase large chain family. As to quaternary structure, tetramer of two alpha and two beta subunits. This protein undergoes protein self-splicing that involves post-translational excision of the intervening region (intein) followed by peptide ligation.

It catalyses the reaction a 2'-deoxyribonucleoside 5'-diphosphate + [thioredoxin]-disulfide + H2O = a ribonucleoside 5'-diphosphate + [thioredoxin]-dithiol. Under complex allosteric control mediated by deoxynucleoside triphosphates and ATP binding. The type of nucleotide bound at the specificity site determines substrate preference. It seems probable that ATP makes the enzyme reduce CDP and UDP, dGTP favors ADP reduction and dTTP favors GDP reduction. In terms of biological role, provides the precursors necessary for DNA synthesis. Catalyzes the biosynthesis of deoxyribonucleotides from the corresponding ribonucleotides. The polypeptide is Ribonucleoside-diphosphate reductase NrdEB subunit alpha (nrdEB) (Bacillus subtilis (strain 168)).